We begin with the raw amino-acid sequence, 318 residues long: tRNA pseudouridine synthase B (318 aa).

The Nucleophile role is filled by aspartate 47.

Belongs to the pseudouridine synthase TruB family. Type 1 subfamily.

The enzyme catalyses uridine(55) in tRNA = pseudouridine(55) in tRNA. Its function is as follows. Responsible for synthesis of pseudouridine from uracil-55 in the psi GC loop of transfer RNAs. This Aliivibrio salmonicida (strain LFI1238) (Vibrio salmonicida (strain LFI1238)) protein is tRNA pseudouridine synthase B.